We begin with the raw amino-acid sequence, 399 residues long: Methylthioribose kinase (399 aa).

ATP is bound by residues Asn-40, Lys-57, and 111-113 (EDL). Asp-229 contacts substrate. An ATP-binding site is contributed by 246–248 (DAE). Arg-344 provides a ligand contact to substrate.

This sequence belongs to the methylthioribose kinase family. In terms of assembly, homodimer.

The catalysed reaction is 5-(methylsulfanyl)-D-ribose + ATP = 5-(methylsulfanyl)-alpha-D-ribose 1-phosphate + ADP + H(+). It functions in the pathway amino-acid biosynthesis; L-methionine biosynthesis via salvage pathway; S-methyl-5-thio-alpha-D-ribose 1-phosphate from S-methyl-5'-thioadenosine (hydrolase route): step 2/2. Functionally, catalyzes the phosphorylation of methylthioribose into methylthioribose-1-phosphate. The protein is Methylthioribose kinase of Citrobacter koseri (strain ATCC BAA-895 / CDC 4225-83 / SGSC4696).